We begin with the raw amino-acid sequence, 82 residues long: Turripeptide Lol6.1 (82 aa).

The first 23 residues, 1-23 (MRFHWIPTLTVLLVLSMSFGTEA), serve as a signal peptide directing secretion. Positions 24 to 48 (IPXXXXXXXXXXXXXXXXXXXXXXX) are excised as a propeptide. Intrachain disulfides connect Cys54–Cys66, Cys58–Cys71, and Cys65–Cys77.

In terms of tissue distribution, expressed by the venom duct.

It localises to the secreted. Acts as a neurotoxin by inhibiting an ion channel. The sequence is that of Turripeptide Lol6.1 from Iotyrris olangoensis (Sea snail).